A 298-amino-acid chain; its full sequence is GTPase Era (298 aa).

The Era-type G domain maps to 7-174; it reads RSGFVSIIGR…VELVRKALPQ (168 aa). The tract at residues 15–22 is G1; it reads GRPNVGKS. 15-22 is a GTP binding site; the sequence is GRPNVGKS. Positions 41–45 are G2; that stretch reads QTTRN. The tract at residues 62–65 is G3; sequence DTPG. Residues 62–66 and 124–127 contribute to the GTP site; these read DTPGI and NKVD. The tract at residues 124-127 is G4; it reads NKVD. Residues 153-155 form a G5 region; it reads ISA. The region spanning 205–283 is the KH type-2 domain; it reads TRDEVPYATA…FLELFVRVRK (79 aa).

Belongs to the TRAFAC class TrmE-Era-EngA-EngB-Septin-like GTPase superfamily. Era GTPase family. As to quaternary structure, monomer.

The protein resides in the cytoplasm. Its subcellular location is the cell inner membrane. In terms of biological role, an essential GTPase that binds both GDP and GTP, with rapid nucleotide exchange. Plays a role in 16S rRNA processing and 30S ribosomal subunit biogenesis and possibly also in cell cycle regulation and energy metabolism. The polypeptide is GTPase Era (Geobacter metallireducens (strain ATCC 53774 / DSM 7210 / GS-15)).